A 412-amino-acid chain; its full sequence is Aurora kinase (412 aa).

Residues 94–119 (NEKVRPSKSSHIPVKSPIRKKGHSPA) are disordered. A Protein kinase domain is found at 148 to 401 (FEIGKVLGKG…LAEVMNHPWI (254 aa)). ATP contacts are provided by residues 154–162 (LGKGKLGKV) and Lys177. Asp271 (proton acceptor) is an active-site residue.

It belongs to the protein kinase superfamily. Ser/Thr protein kinase family. Aurora subfamily.

Its subcellular location is the nucleus. The protein localises to the cytoplasm. The protein resides in the cytoskeleton. It is found in the spindle. It localises to the chromosome. Its subcellular location is the centromere. The protein localises to the kinetochore. It catalyses the reaction L-seryl-[protein] + ATP = O-phospho-L-seryl-[protein] + ADP + H(+). It carries out the reaction L-threonyl-[protein] + ATP = O-phospho-L-threonyl-[protein] + ADP + H(+). In terms of biological role, component of the chromosomal passenger complex (CPC), a complex that acts as a key regulator of chromosome segregation and cytokinesis. Has a role in error-correction of aberrent kinetochore-microtubule attachments to ensure that sister kinetochores become bioriented and connect to opposite poles by promoting spindle assembly checkpoint signaling. In Debaryomyces hansenii (strain ATCC 36239 / CBS 767 / BCRC 21394 / JCM 1990 / NBRC 0083 / IGC 2968) (Yeast), this protein is Aurora kinase (IPL1).